A 198-amino-acid polypeptide reads, in one-letter code: HTH-type transcriptional regulator BetI (198 aa).

The HTH tetR-type domain occupies 8–68 (PIRRQQLIEA…ATMRYLIRHL (61 aa)). Positions 31 to 50 (SIAQIAKRAGVSNGIISHYF) form a DNA-binding region, H-T-H motif.

The protein operates within amine and polyamine biosynthesis; betaine biosynthesis via choline pathway [regulation]. Repressor involved in the biosynthesis of the osmoprotectant glycine betaine. It represses transcription of the choline transporter BetT and the genes of BetAB involved in the synthesis of glycine betaine. The chain is HTH-type transcriptional regulator BetI from Yersinia pseudotuberculosis serotype O:1b (strain IP 31758).